A 92-amino-acid chain; its full sequence is Putative transmembrane protein ORF92 (92 aa).

3 helical membrane passes run 11 to 28, 32 to 52, and 54 to 74; these read FVKG…TYAI, FFSS…LFAS, and FLFD…IGVG.

It localises to the host membrane. This Acidianus convivator (ABV) protein is Putative transmembrane protein ORF92.